The sequence spans 159 residues: MRCPKCQHNKSNVIDSRQAEDGNTIRRRRECDACHARFTTFERVEEVPLLVVKKDGTREQFSRDKIFNGISMSAQKRPVSSEDIENAITRIEKNIRRNHDGEVDSEVIGNLVMKELADLDEITYVRFASVYRSFKDVDEIEELLQEITKTVRAKKESKK.

The disordered stretch occupies residues 1 to 21; the sequence is MRCPKCQHNKSNVIDSRQAED. Residues 3–34 fold into a zinc finger; that stretch reads CPKCQHNKSNVIDSRQAEDGNTIRRRRECDAC. One can recognise an ATP-cone domain in the interval 49–139; that stretch reads LLVVKKDGTR…VYRSFKDVDE (91 aa).

The protein belongs to the NrdR family. Requires Zn(2+) as cofactor.

Functionally, negatively regulates transcription of bacterial ribonucleotide reductase nrd genes and operons by binding to NrdR-boxes. The sequence is that of Transcriptional repressor NrdR from Streptococcus thermophilus (strain ATCC BAA-491 / LMD-9).